Here is a 123-residue protein sequence, read N- to C-terminus: MKHKRSDKVAETIHTTISTILSRGLNDPRIGFVTITGVEVTDDLHLARIFFTVIGDEAAKKSSEAGLNSAARFIRHELGKVLKMRYTPDILFKYDHSQEYGQRIDDLLREVGTGNDGNDSEDR.

This sequence belongs to the RbfA family. Monomer. Binds 30S ribosomal subunits, but not 50S ribosomal subunits or 70S ribosomes.

The protein localises to the cytoplasm. Its function is as follows. One of several proteins that assist in the late maturation steps of the functional core of the 30S ribosomal subunit. Associates with free 30S ribosomal subunits (but not with 30S subunits that are part of 70S ribosomes or polysomes). Required for efficient processing of 16S rRNA. May interact with the 5'-terminal helix region of 16S rRNA. This Trichlorobacter lovleyi (strain ATCC BAA-1151 / DSM 17278 / SZ) (Geobacter lovleyi) protein is Ribosome-binding factor A.